The sequence spans 259 residues: MENVYISSYSSNEQTSMAVAATNIRELLSQYVDDANLEDLIEWAMEKSSKYYIKNIGNTKSNIEETKFESKNNIGIEYSKDSRNKLSYRNKPFIATNLEYKTLCDMIKGTSGTEKEFLRYLLFGIKCIKKGVEYNIDKIKDVSYNDYFNVLNEKYNTPCPNCKSRNTTPMMIQTRAADEPPLVRHACRDCKQHFKPPKFRAFRNLNVTTQSIHKNKEITEILPDNNPSPPESPEPASPIDDGLIRVTFDRNDEPPEDDE.

The segment at 155–195 (YNTPCPNCKSRNTTPMMIQTRAADEPPLVRHACRDCKQHFK) adopts a TFIIS-type zinc-finger fold. 4 residues coordinate Zn(2+): Cys-159, Cys-162, Cys-187, and Cys-190. The tract at residues 220 to 259 (EILPDNNPSPPESPEPASPIDDGLIRVTFDRNDEPPEDDE) is disordered. Pro residues predominate over residues 226 to 236 (NPSPPESPEPA).

It belongs to the poxviridae DNA-directed RNA polymerase 30 kDa subunit family. The DNA-dependent RNA polymerase (vRNAP) consists of eight subunits encoded by early viral genes and termed according to their apparent molecular masses Rpo147, Rpo132, Rpo35, Rpo30, Rpo22, Rpo19, Rpo18, and Rpo7. The same holoenzyme, with the addition of the transcription-specificity factor RAP94, is used for early gene expression.

Its subcellular location is the virion. The protein resides in the host cytoplasm. The enzyme catalyses RNA(n) + a ribonucleoside 5'-triphosphate = RNA(n+1) + diphosphate. Its function is as follows. Part of the DNA-dependent RNA polymerase which catalyzes the transcription of viral DNA into RNA using the four ribonucleoside triphosphates as substrates. Responsible for the transcription of early, intermediate and late genes. DNA-dependent RNA polymerase associates with the early transcription factor (ETF), itself composed of OPG118 and OPG134, thereby allowing the early genes transcription. Late transcription, and probably also intermediate transcription, require newly synthesized RNA polymerase. In Variola virus (isolate Human/India/Ind3/1967) (VARV), this protein is DNA-directed RNA polymerase 30 kDa polypeptide (OPG066).